The following is a 416-amino-acid chain: Serine protease inhibitor A3K (416 aa).

Positions 1–20 (MAFIAALGLLMAGICPAVLC) are cleaved as a signal peptide. 4 N-linked (GlcNAc...) asparagine glycosylation sites follow: Asn102, Asn182, Asn220, and Asn267. The interval 365–392 (GTEGAAATAVTAALKSLPQTIPLLNFNR) is RCL.

The protein belongs to the serpin family. N-glycosylated. In terms of tissue distribution, liver and plasma.

Its subcellular location is the secreted. In terms of biological role, binds to and inhibits kallikreins. Inhibits trypsin but not chymotrypsin or elastase. This chain is Serine protease inhibitor A3K (Serpina3k), found in Rattus norvegicus (Rat).